Here is a 276-residue protein sequence, read N- to C-terminus: Adenylyl-sulfate kinase 1, chloroplastic (276 aa).

A chloroplast-targeting transit peptide spans 1-38; that stretch reads MIAAGAKSLLGLSMASPKGIFDSNSMSNSRSVVVVRAC. Residues 46-74 form a disordered region; sequence TLSHNKNGSIPEVKSINGHTGQKQGPLST. Over residues 62–74 the composition is skewed to polar residues; sequence NGHTGQKQGPLST. 108 to 116 contacts ATP; sequence GLSGSGKST. Residues Asp-138, Arg-141, Arg-155, Asn-158, 181-182, and Gly-231 each bind substrate; that span reads IS. Catalysis depends on Ser-182, which acts as the Phosphoserine intermediate.

This sequence belongs to the APS kinase family. In terms of assembly, homodimer; disulfide-linked. Interacts with APK2. Expressed in root vasculature, root tips, leaf epidermal and guard cells, pollen grains and funiculus of developing seeds.

The protein resides in the plastid. It localises to the chloroplast. The catalysed reaction is adenosine 5'-phosphosulfate + ATP = 3'-phosphoadenylyl sulfate + ADP + H(+). The protein operates within sulfur metabolism; hydrogen sulfide biosynthesis; sulfite from sulfate: step 2/3. In terms of biological role, catalyzes the synthesis of activated sulfate. Essential for plant reproduction and viability. Required for the production of glucosinolates. In Arabidopsis thaliana (Mouse-ear cress), this protein is Adenylyl-sulfate kinase 1, chloroplastic (APK1).